A 702-amino-acid polypeptide reads, in one-letter code: ATP-dependent RNA helicase DDX4 (702 aa).

A disordered region spans residues 22–228 (FEKDKYSSGA…YIPPPPPEDE (207 aa)). A compositionally biased stretch (polar residues) spans 29–46 (SGANGDTFNRTSASSDIG). Gly residues-rich tracts occupy residues 58–68 (GGFGRGKGFGN) and 125–137 (RGSF…GFGL). Composition is skewed to polar residues over residues 141–150 (NSESDQDQGT) and 195–215 (SGKN…SQGP). Residues Ser195 and Ser199 each carry the phosphoserine modification. The segment at 201–220 (KSETEGGESSDSQGPKVTYI) is interaction with RANBP9. Positions 261–289 (LTFEEANLCQTLNNNIAKAGYTKLTPVQK) match the Q motif motif. Residues 292–475 (IPIVLAGRDL…GDFLKSSYLF (184 aa)) form the Helicase ATP-binding domain. 305 to 312 (AQTGSGKT) provides a ligand contact to ATP. A DEAD box motif is present at residues 419-422 (DEAD). Residues 503–648 (KLVEILRNIG…DVPAWLEEIA (146 aa)) form the Helicase C-terminal domain. The segment covering 681–693 (TLNTAGISSSQAP) has biased composition (polar residues). Residues 681 to 702 (TLNTAGISSSQAPNPVDDESWD) form a disordered region. Ser700 is subject to Phosphoserine.

It belongs to the DEAD box helicase family. DDX4/VASA subfamily. Found in a mRNP complex, at least composed of TDRD1, TDRD6, TDRD7 and DDX4. Interacts with RANBP9. Interacts with RANBP10. Interacts with PIWIL2 and MAEL. Interacts with BMAL1 and CLOCK. Interacts with Tex19.1 and, probably, Tex19.2. Interacts with RBM46. Testis-specific.

The protein localises to the cytoplasm. The protein resides in the perinuclear region. It catalyses the reaction ATP + H2O = ADP + phosphate + H(+). ATP-dependent RNA helicase required during spermatogenesis to repress transposable elements and preventing their mobilization, which is essential for the germline integrity. Acts via the piRNA metabolic process, which mediates the repression of transposable elements during meiosis by forming complexes composed of piRNAs and Piwi proteins and governs the methylation and subsequent repression of transposons. Involved in the secondary piRNAs metabolic process, the production of piRNAs in fetal male germ cells through a ping-pong amplification cycle. Required for PIWIL2 slicing-triggered piRNA biogenesis: helicase activity enables utilization of one of the slice cleavage fragments generated by PIWIL2 and processing these pre-piRNAs into piRNAs. The chain is ATP-dependent RNA helicase DDX4 from Mus musculus (Mouse).